A 457-amino-acid chain; its full sequence is Bifunctional protein GlmU (457 aa).

A pyrophosphorylase region spans residues 1–230; the sequence is MSKRYAVVLA…FEESLGVNDR (230 aa). UDP-N-acetyl-alpha-D-glucosamine is bound by residues 9–12, lysine 23, glutamine 73, and 78–79; these read LAAG and GT. Mg(2+) is bound at residue aspartate 103. Residues glycine 140, glutamate 155, asparagine 170, and asparagine 228 each coordinate UDP-N-acetyl-alpha-D-glucosamine. Asparagine 228 serves as a coordination point for Mg(2+). The interval 231–251 is linker; the sequence is IALAEASRLMQRRINENHMRN. Positions 252 to 457 are N-acetyltransferase; sequence GVTLVNPENT…GYAKHLNHGK (206 aa). Positions 333 and 351 each coordinate UDP-N-acetyl-alpha-D-glucosamine. Histidine 363 acts as the Proton acceptor in catalysis. Tyrosine 366 and asparagine 377 together coordinate UDP-N-acetyl-alpha-D-glucosamine. Acetyl-CoA contacts are provided by residues 386-387, alanine 423, and arginine 440; that span reads NY.

In the N-terminal section; belongs to the N-acetylglucosamine-1-phosphate uridyltransferase family. This sequence in the C-terminal section; belongs to the transferase hexapeptide repeat family. As to quaternary structure, homotrimer. Mg(2+) is required as a cofactor.

Its subcellular location is the cytoplasm. The enzyme catalyses alpha-D-glucosamine 1-phosphate + acetyl-CoA = N-acetyl-alpha-D-glucosamine 1-phosphate + CoA + H(+). It catalyses the reaction N-acetyl-alpha-D-glucosamine 1-phosphate + UTP + H(+) = UDP-N-acetyl-alpha-D-glucosamine + diphosphate. It functions in the pathway nucleotide-sugar biosynthesis; UDP-N-acetyl-alpha-D-glucosamine biosynthesis; N-acetyl-alpha-D-glucosamine 1-phosphate from alpha-D-glucosamine 6-phosphate (route II): step 2/2. The protein operates within nucleotide-sugar biosynthesis; UDP-N-acetyl-alpha-D-glucosamine biosynthesis; UDP-N-acetyl-alpha-D-glucosamine from N-acetyl-alpha-D-glucosamine 1-phosphate: step 1/1. It participates in bacterial outer membrane biogenesis; LPS lipid A biosynthesis. In terms of biological role, catalyzes the last two sequential reactions in the de novo biosynthetic pathway for UDP-N-acetylglucosamine (UDP-GlcNAc). The C-terminal domain catalyzes the transfer of acetyl group from acetyl coenzyme A to glucosamine-1-phosphate (GlcN-1-P) to produce N-acetylglucosamine-1-phosphate (GlcNAc-1-P), which is converted into UDP-GlcNAc by the transfer of uridine 5-monophosphate (from uridine 5-triphosphate), a reaction catalyzed by the N-terminal domain. This is Bifunctional protein GlmU from Listeria monocytogenes serotype 4b (strain F2365).